A 215-amino-acid chain; its full sequence is 3-demethoxyubiquinol 3-hydroxylase (215 aa).

Fe cation contacts are provided by Glu64, Glu94, His97, Glu146, Glu178, and His181.

Belongs to the COQ7 family. Fe cation is required as a cofactor.

Its subcellular location is the cell membrane. It catalyses the reaction a 5-methoxy-2-methyl-3-(all-trans-polyprenyl)benzene-1,4-diol + AH2 + O2 = a 3-demethylubiquinol + A + H2O. It functions in the pathway cofactor biosynthesis; ubiquinone biosynthesis. Functionally, catalyzes the hydroxylation of 2-nonaprenyl-3-methyl-6-methoxy-1,4-benzoquinol during ubiquinone biosynthesis. The sequence is that of 3-demethoxyubiquinol 3-hydroxylase from Coxiella burnetii (strain CbuG_Q212) (Coxiella burnetii (strain Q212)).